Consider the following 149-residue polypeptide: Transcriptional repressor NrdR (149 aa).

A zinc finger lies at 3–34 (CPFCAAVDTKVIDSRLVGDGSQVRRRRQCLEC). The 91-residue stretch at 49-139 (PRVIKSDDIR…VYRSFEDIRE (91 aa)) folds into the ATP-cone domain.

Belongs to the NrdR family. It depends on Zn(2+) as a cofactor.

Negatively regulates transcription of bacterial ribonucleotide reductase nrd genes and operons by binding to NrdR-boxes. This is Transcriptional repressor NrdR from Photorhabdus laumondii subsp. laumondii (strain DSM 15139 / CIP 105565 / TT01) (Photorhabdus luminescens subsp. laumondii).